The following is a 72-amino-acid chain: ATP synthase protein 8 (72 aa).

The chain crosses the membrane as a helical span at residues 16-36; sequence WTLIALFLLFSFLVVSVLPAV.

This sequence belongs to the ATPase protein 8 family. F-type ATPases have 2 components, CF(1) - the catalytic core - and CF(0) - the membrane proton channel.

The protein resides in the mitochondrion membrane. Mitochondrial membrane ATP synthase (F(1)F(0) ATP synthase or Complex V) produces ATP from ADP in the presence of a proton gradient across the membrane which is generated by electron transport complexes of the respiratory chain. F-type ATPases consist of two structural domains, F(1) - containing the extramembraneous catalytic core and F(0) - containing the membrane proton channel, linked together by a central stalk and a peripheral stalk. During catalysis, ATP synthesis in the catalytic domain of F(1) is coupled via a rotary mechanism of the central stalk subunits to proton translocation. Part of the complex F(0) domain. Minor subunit located with subunit a in the membrane. The sequence is that of ATP synthase protein 8 (MTATP8) from Metridium senile (Brown sea anemone).